A 101-amino-acid polypeptide reads, in one-letter code: uncharacterized protein (101 aa).

The signal sequence occupies residues 1 to 18 (MSINALLYVLSLALLIWT). The chain crosses the membrane as a helical span at residues 62-82 (FQFDSIPSSSLSLSPFPFLFF).

It localises to the membrane. This is an uncharacterized protein from Saccharomyces cerevisiae (strain ATCC 204508 / S288c) (Baker's yeast).